The chain runs to 257 residues: Diphthine synthase (257 aa).

S-adenosyl-L-methionine-binding positions include L9, D83, M86, 111 to 112 (SI), and I163.

It belongs to the diphthine synthase family. Homodimer.

It catalyses the reaction 2-[(3S)-amino-3-carboxypropyl]-L-histidyl-[translation elongation factor 2] + 3 S-adenosyl-L-methionine = diphthine-[translation elongation factor 2] + 3 S-adenosyl-L-homocysteine + 3 H(+). It participates in protein modification; peptidyl-diphthamide biosynthesis. Functionally, S-adenosyl-L-methionine-dependent methyltransferase that catalyzes the trimethylation of the amino group of the modified target histidine residue in translation elongation factor 2 (EF-2), to form an intermediate called diphthine. The three successive methylation reactions represent the second step of diphthamide biosynthesis. The protein is Diphthine synthase of Thermoplasma acidophilum (strain ATCC 25905 / DSM 1728 / JCM 9062 / NBRC 15155 / AMRC-C165).